A 79-amino-acid chain; its full sequence is Putative antitoxin VapB1 (79 aa).

Its function is as follows. Antitoxin component of a possible type II toxin-antitoxin (TA) system. The cognate toxin is VapC1. This is Putative antitoxin VapB1 (vapB1) from Mycobacterium tuberculosis (strain ATCC 25618 / H37Rv).